Reading from the N-terminus, the 206-residue chain is Phosphoribosylglycinamide formyltransferase (206 aa).

N(1)-(5-phospho-beta-D-ribosyl)glycinamide is bound at residue 13–15 (GTN). Residues 99–102 (MIIL) and Asn-121 each bind (6R)-10-formyltetrahydrofolate. The active-site Proton donor is His-123. Position 163 (Asp-163) interacts with (6R)-10-formyltetrahydrofolate. Residue Glu-192 coordinates N(1)-(5-phospho-beta-D-ribosyl)glycinamide.

Belongs to the GART family.

It catalyses the reaction N(1)-(5-phospho-beta-D-ribosyl)glycinamide + (6R)-10-formyltetrahydrofolate = N(2)-formyl-N(1)-(5-phospho-beta-D-ribosyl)glycinamide + (6S)-5,6,7,8-tetrahydrofolate + H(+). Its pathway is purine metabolism; IMP biosynthesis via de novo pathway; N(2)-formyl-N(1)-(5-phospho-D-ribosyl)glycinamide from N(1)-(5-phospho-D-ribosyl)glycinamide (10-formyl THF route): step 1/1. This is Phosphoribosylglycinamide formyltransferase (purN) from Dictyostelium discoideum (Social amoeba).